We begin with the raw amino-acid sequence, 878 residues long: AP-5 complex subunit beta-1 (878 aa).

Residues 234-260 are disordered; sequence RLQPQAPSWPAAEEGEGERSLTAREHS. Basic and acidic residues predominate over residues 250-260; sequence GERSLTAREHS.

In terms of assembly, probably part of the adaptor protein complex 5 (AP-5), a tetramer composed of AP5B1, AP5M1, AP5S1 and AP5Z1. Interacts with ZFYVE26 and SPG11.

As part of AP-5, a probable fifth adaptor protein complex it may be involved in endosomal transport. The sequence is that of AP-5 complex subunit beta-1 (AP5B1) from Homo sapiens (Human).